The chain runs to 176 residues: Peptide methionine sulfoxide reductase MsrA (176 aa).

Cys10 is an active-site residue.

Belongs to the MsrA Met sulfoxide reductase family.

The enzyme catalyses L-methionyl-[protein] + [thioredoxin]-disulfide + H2O = L-methionyl-(S)-S-oxide-[protein] + [thioredoxin]-dithiol. It carries out the reaction [thioredoxin]-disulfide + L-methionine + H2O = L-methionine (S)-S-oxide + [thioredoxin]-dithiol. In terms of biological role, has an important function as a repair enzyme for proteins that have been inactivated by oxidation. Catalyzes the reversible oxidation-reduction of methionine sulfoxide in proteins to methionine. This Chromobacterium violaceum (strain ATCC 12472 / DSM 30191 / JCM 1249 / CCUG 213 / NBRC 12614 / NCIMB 9131 / NCTC 9757 / MK) protein is Peptide methionine sulfoxide reductase MsrA.